Consider the following 265-residue polypeptide: 3-methyl-2-oxobutanoate hydroxymethyltransferase (265 aa).

Residues aspartate 45 and aspartate 84 each contribute to the Mg(2+) site. 3-methyl-2-oxobutanoate is bound by residues 45–46, aspartate 84, and lysine 112; that span reads DS. Residue glutamate 114 coordinates Mg(2+). Glutamate 181 serves as the catalytic Proton acceptor.

It belongs to the PanB family. As to quaternary structure, homodecamer; pentamer of dimers. The cofactor is Mg(2+).

The protein localises to the cytoplasm. The enzyme catalyses 3-methyl-2-oxobutanoate + (6R)-5,10-methylene-5,6,7,8-tetrahydrofolate + H2O = 2-dehydropantoate + (6S)-5,6,7,8-tetrahydrofolate. It participates in cofactor biosynthesis; (R)-pantothenate biosynthesis; (R)-pantoate from 3-methyl-2-oxobutanoate: step 1/2. In terms of biological role, catalyzes the reversible reaction in which hydroxymethyl group from 5,10-methylenetetrahydrofolate is transferred onto alpha-ketoisovalerate to form ketopantoate. The polypeptide is 3-methyl-2-oxobutanoate hydroxymethyltransferase (Yersinia enterocolitica serotype O:8 / biotype 1B (strain NCTC 13174 / 8081)).